The sequence spans 1055 residues: Bifunctional fucokinase/GDP-fucose pyrophosphorylase (1055 aa).

The GDP-fucose pyrophosphorylase stretch occupies residues 34-565 (WDAIVLTAAS…SSQRVSLEEL (532 aa)). Positions 693–1055 (GKSHSENHIS…VKVYNWSICI (363 aa)) are L-fucokinase. 826 to 836 (PRGSGLGTSSI) provides a ligand contact to ATP.

The protein belongs to the GHMP kinase family. Mn(2+) serves as cofactor. The cofactor is Mg(2+). Ubiquitous. Highest expression in flower buds.

The catalysed reaction is L-fucose + ATP = beta-L-fucose 1-phosphate + ADP + H(+). The enzyme catalyses beta-L-fucose 1-phosphate + GTP + H(+) = GDP-beta-L-fucose + diphosphate. Bifunctional enzyme involved in the salvage pathway which converts free L-fucose to GDP-L-fucose. Catalyzes two successive reactions, the ATP-dependent phosphorylation of L-fucose to L-fucose 1-phosphate, and its guanylylation to GDP-L-fucose. The sugar-1-kinase activity has a strict substrate specificity for L-fucose and ATP. The pyrophosphorylase activity has a strict substrate specificity for L-fucose 1-phosphate and GTP. The polypeptide is Bifunctional fucokinase/GDP-fucose pyrophosphorylase (FKGP) (Arabidopsis thaliana (Mouse-ear cress)).